The chain runs to 72 residues: Exodeoxyribonuclease 7 small subunit (72 aa).

This sequence belongs to the XseB family. Heterooligomer composed of large and small subunits.

The protein resides in the cytoplasm. The enzyme catalyses Exonucleolytic cleavage in either 5'- to 3'- or 3'- to 5'-direction to yield nucleoside 5'-phosphates.. Bidirectionally degrades single-stranded DNA into large acid-insoluble oligonucleotides, which are then degraded further into small acid-soluble oligonucleotides. In Clostridium kluyveri (strain NBRC 12016), this protein is Exodeoxyribonuclease 7 small subunit.